The chain runs to 366 residues: UDP-GlcNAc:ribostamycin N-acetylglucosaminyltransferase (366 aa).

Over residues 342–352 the composition is skewed to low complexity; it reads AAGAGPAVPAG. Positions 342 to 366 are disordered; that stretch reads AAGAGPAVPAGAGEGRGGREEEHGG. Residues 357-366 show a composition bias toward basic and acidic residues; it reads RGGREEEHGG.

This sequence belongs to the glycosyltransferase group 1 family. Glycosyltransferase 4 subfamily. A divalent metal cation is required as a cofactor.

The enzyme catalyses ribostamycin + UDP-N-acetyl-alpha-D-glucosamine = 2'''-acetyl-6'''-hydroxyneomycin C + UDP + H(+). The protein operates within antibiotic biosynthesis; neomycin biosynthesis. Functionally, glycosyltransferase involved in the biosynthesis of neomycin by mediating glycosylation of ribostamycin with UDP-GlcNAc as a sugar donor to generate 2'''-acetyl-6'''-hydroxyneomycin C. This chain is UDP-GlcNAc:ribostamycin N-acetylglucosaminyltransferase (neoK), found in Streptomyces fradiae (Streptomyces roseoflavus).